Consider the following 236-residue polypeptide: 2-C-methyl-D-erythritol 4-phosphate cytidylyltransferase (236 aa).

It belongs to the IspD/TarI cytidylyltransferase family. IspD subfamily.

The catalysed reaction is 2-C-methyl-D-erythritol 4-phosphate + CTP + H(+) = 4-CDP-2-C-methyl-D-erythritol + diphosphate. The protein operates within isoprenoid biosynthesis; isopentenyl diphosphate biosynthesis via DXP pathway; isopentenyl diphosphate from 1-deoxy-D-xylulose 5-phosphate: step 2/6. In terms of biological role, catalyzes the formation of 4-diphosphocytidyl-2-C-methyl-D-erythritol from CTP and 2-C-methyl-D-erythritol 4-phosphate (MEP). This Pseudomonas syringae pv. syringae (strain B728a) protein is 2-C-methyl-D-erythritol 4-phosphate cytidylyltransferase.